The primary structure comprises 299 residues: Probable lipid kinase YegS (299 aa).

Residues 2–133 (ANFPDSLLIL…IDMARVNDKT (132 aa)) enclose the DAGKc domain. ATP-binding positions include Thr-40, 66–72 (GDGTINE), and Thr-95. Mg(2+) contacts are provided by Leu-215, Asp-218, and Leu-220. Residue Glu-271 is the Proton acceptor of the active site.

The protein belongs to the diacylglycerol/lipid kinase family. YegS lipid kinase subfamily. It depends on Mg(2+) as a cofactor. The cofactor is Ca(2+).

It is found in the cytoplasm. In terms of biological role, probably phosphorylates lipids; the in vivo substrate is unknown. This is Probable lipid kinase YegS from Salmonella arizonae (strain ATCC BAA-731 / CDC346-86 / RSK2980).